Reading from the N-terminus, the 129-residue chain is Fluoride-specific ion channel FluC 2 (129 aa).

The next 4 helical transmembrane spans lie at 3 to 23 (FLYV…MNLW), 32 to 52 (ATLA…RFLA), 59 to 79 (LVLL…FSAF), and 90 to 110 (GAWL…LIMV). Residues glycine 71 and threonine 74 each coordinate Na(+).

It belongs to the fluoride channel Fluc/FEX (TC 1.A.43) family.

The protein localises to the cell membrane. The enzyme catalyses fluoride(in) = fluoride(out). With respect to regulation, na(+) is not transported, but it plays an essential structural role and its presence is essential for fluoride channel function. Fluoride-specific ion channel. Important for reducing fluoride concentration in the cell, thus reducing its toxicity. The polypeptide is Fluoride-specific ion channel FluC 2 (Listeria monocytogenes serovar 1/2a (strain ATCC BAA-679 / EGD-e)).